The chain runs to 389 residues: Probable DNA double-strand break repair nuclease NurA (389 aa).

Positions 74 and 151 each coordinate Mn(2+).

The protein belongs to the NurA family. Mn(2+) is required as a cofactor.

Functionally, involved in DNA double-strand break (DSB) repair. Probably acts with HerA to stimulate resection of the 5' strand and produce the long 3' single-strand that is required for RadA loading. The polypeptide is Probable DNA double-strand break repair nuclease NurA (Methanocaldococcus jannaschii (strain ATCC 43067 / DSM 2661 / JAL-1 / JCM 10045 / NBRC 100440) (Methanococcus jannaschii)).